The chain runs to 400 residues: Nicotinate phosphoribosyltransferase (400 aa).

At H220 the chain carries Phosphohistidine; by autocatalysis.

This sequence belongs to the NAPRTase family. Transiently phosphorylated on a His residue during the reaction cycle. Phosphorylation strongly increases the affinity for substrates and increases the rate of nicotinate D-ribonucleotide production. Dephosphorylation regenerates the low-affinity form of the enzyme, leading to product release.

The catalysed reaction is nicotinate + 5-phospho-alpha-D-ribose 1-diphosphate + ATP + H2O = nicotinate beta-D-ribonucleotide + ADP + phosphate + diphosphate. The protein operates within cofactor biosynthesis; NAD(+) biosynthesis; nicotinate D-ribonucleotide from nicotinate: step 1/1. Catalyzes the synthesis of beta-nicotinate D-ribonucleotide from nicotinate and 5-phospho-D-ribose 1-phosphate at the expense of ATP. In Citrobacter koseri (strain ATCC BAA-895 / CDC 4225-83 / SGSC4696), this protein is Nicotinate phosphoribosyltransferase.